We begin with the raw amino-acid sequence, 1142 residues long: Serine/threonine-protein kinase dst2 (1142 aa).

The Protein kinase domain maps to 20–276 (FELIEEIAEG…ATELLKHPFV (257 aa)). Residues 26 to 34 (IAEGSFGTV) and K49 contribute to the ATP site. The active-site Proton acceptor is the D141. Positions 300–322 (LEEGGDEDEDSSEQEGMDSDDKD) are enriched in acidic residues. 5 disordered regions span residues 300 to 492 (LEEG…KTLE), 515 to 636 (KKQQ…KSTP), 744 to 768 (ETNH…TEQR), 939 to 974 (SIEE…GSVT), and 1040 to 1142 (EEQK…DNQD). The span at 323 to 336 (SDLKKSVGTSDRKS) shows a compositional bias: basic and acidic residues. A compositionally biased stretch (polar residues) spans 355-365 (QRKSTGQNLQL). The span at 371-390 (QQSSSSSSSSSSSLSSQSLQ) shows a compositional bias: low complexity. The span at 391 to 413 (PQAVNKSTDRLSANINGSNTKSN) shows a compositional bias: polar residues. The segment covering 421-452 (AAASASASSLNLSTGNLQQSLSGSGSITTNSG) has biased composition (low complexity). The segment covering 467–477 (SSDDRSPDIRT) has biased composition (basic and acidic residues). A compositionally biased stretch (low complexity) spans 541-554 (KQNAAKATQQQKQS). Basic and acidic residues-rich tracts occupy residues 555 to 588 (AAKE…KKNQ), 597 to 635 (KVTD…DKST), 744 to 760 (ETNH…EQHI), and 939 to 969 (SIEE…EQKK). Residues 716 to 1050 (QEYHTVLREN…EQKKSKLKLK (335 aa)) adopt a coiled-coil conformation. Residues 1068-1091 (TGTTPPSTSSNQKTLNNSNGASSN) are compositionally biased toward low complexity.

It belongs to the protein kinase superfamily. STE Ser/Thr protein kinase family. STE20 subfamily. It depends on Mg(2+) as a cofactor.

The catalysed reaction is L-seryl-[protein] + ATP = O-phospho-L-seryl-[protein] + ADP + H(+). It catalyses the reaction L-threonyl-[protein] + ATP = O-phospho-L-threonyl-[protein] + ADP + H(+). The sequence is that of Serine/threonine-protein kinase dst2 from Dictyostelium discoideum (Social amoeba).